The sequence spans 189 residues: Crossover junction endodeoxyribonuclease RuvC (189 aa).

Active-site residues include D9, E70, and D143. Positions 9, 70, and 143 each coordinate Mg(2+). The segment covering 162 to 178 has biased composition (low complexity); the sequence is MGAASGNSSLTPAQKAW. Residues 162–189 form a disordered region; sequence MGAASGNSSLTPAQKAWADAEAKARRKR. Residues 179 to 189 show a composition bias toward basic and acidic residues; the sequence is ADAEAKARRKR.

The protein belongs to the RuvC family. Homodimer which binds Holliday junction (HJ) DNA. The HJ becomes 2-fold symmetrical on binding to RuvC with unstacked arms; it has a different conformation from HJ DNA in complex with RuvA. In the full resolvosome a probable DNA-RuvA(4)-RuvB(12)-RuvC(2) complex forms which resolves the HJ. Mg(2+) is required as a cofactor.

The protein localises to the cytoplasm. The catalysed reaction is Endonucleolytic cleavage at a junction such as a reciprocal single-stranded crossover between two homologous DNA duplexes (Holliday junction).. In terms of biological role, the RuvA-RuvB-RuvC complex processes Holliday junction (HJ) DNA during genetic recombination and DNA repair. Endonuclease that resolves HJ intermediates. Cleaves cruciform DNA by making single-stranded nicks across the HJ at symmetrical positions within the homologous arms, yielding a 5'-phosphate and a 3'-hydroxyl group; requires a central core of homology in the junction. The consensus cleavage sequence is 5'-(A/T)TT(C/G)-3'. Cleavage occurs on the 3'-side of the TT dinucleotide at the point of strand exchange. HJ branch migration catalyzed by RuvA-RuvB allows RuvC to scan DNA until it finds its consensus sequence, where it cleaves and resolves the cruciform DNA. The sequence is that of Crossover junction endodeoxyribonuclease RuvC from Paenarthrobacter aurescens (strain TC1).